The following is a 231-amino-acid chain: Probable pyridoxamine 5'-phosphate oxidase (231 aa).

A pyridoxal 5'-phosphate-binding site is contributed by 20-23 (QYEK). 74 to 77 (RLVL) serves as a coordination point for FMN. Residue lysine 79 coordinates pyridoxal 5'-phosphate. Residues 89 to 90 (FT), 96 to 97 (KK), and glutamine 119 contribute to the FMN site. Pyridoxal 5'-phosphate is bound by residues tyrosine 137, arginine 141, and serine 145. Residues 154-155 (QS) and tryptophan 202 contribute to the FMN site. 208 to 210 (RLH) provides a ligand contact to pyridoxal 5'-phosphate. Arginine 212 contributes to the FMN binding site.

Belongs to the pyridoxamine 5'-phosphate oxidase family. Homodimer. FMN serves as cofactor.

The catalysed reaction is pyridoxamine 5'-phosphate + O2 + H2O = pyridoxal 5'-phosphate + H2O2 + NH4(+). It catalyses the reaction pyridoxine 5'-phosphate + O2 = pyridoxal 5'-phosphate + H2O2. It functions in the pathway cofactor metabolism; pyridoxal 5'-phosphate salvage; pyridoxal 5'-phosphate from pyridoxamine 5'-phosphate: step 1/1. Its pathway is cofactor metabolism; pyridoxal 5'-phosphate salvage; pyridoxal 5'-phosphate from pyridoxine 5'-phosphate: step 1/1. Catalyzes the oxidation of either pyridoxine 5'-phosphate (PNP) or pyridoxamine 5'-phosphate (PMP) into pyridoxal 5'-phosphate (PLP). The protein is Probable pyridoxamine 5'-phosphate oxidase of Schizosaccharomyces pombe (strain 972 / ATCC 24843) (Fission yeast).